Here is a 310-residue protein sequence, read N- to C-terminus: UPF0761 membrane protein VF_0100 (310 aa).

Transmembrane regions (helical) follow at residues 34 to 54 (YMAYITLLSLVPLITVLLSVL), 97 to 117 (MTAVGSGFLFVASVMLISSID), 136 to 156 (FSLYWMILTLGPLLVGASLAA), 178 to 198 (LLGWLPIILSFSAFVGLYLLV), 207 to 227 (HALIGAMSAGCLFEFSKVGFA), and 242 to 262 (ALAAVPILFVWVYLCWIIVLI).

The protein belongs to the UPF0761 family.

The protein resides in the cell inner membrane. This chain is UPF0761 membrane protein VF_0100, found in Aliivibrio fischeri (strain ATCC 700601 / ES114) (Vibrio fischeri).